Here is a 489-residue protein sequence, read N- to C-terminus: 3-octaprenyl-4-hydroxybenzoate carboxy-lyase (489 aa).

Residue Asn-172 participates in Mn(2+) binding. Residues 175-177 (VYR), 189-191 (RWL), and 194-195 (RG) contribute to the prenylated FMN site. Position 240 (Glu-240) interacts with Mn(2+). Asp-288 functions as the Proton donor in the catalytic mechanism.

It belongs to the UbiD family. As to quaternary structure, homohexamer. The cofactor is prenylated FMN. Mn(2+) serves as cofactor.

The protein localises to the cell membrane. The catalysed reaction is a 4-hydroxy-3-(all-trans-polyprenyl)benzoate + H(+) = a 2-(all-trans-polyprenyl)phenol + CO2. The protein operates within cofactor biosynthesis; ubiquinone biosynthesis. Its function is as follows. Catalyzes the decarboxylation of 3-octaprenyl-4-hydroxy benzoate to 2-octaprenylphenol, an intermediate step in ubiquinone biosynthesis. This is 3-octaprenyl-4-hydroxybenzoate carboxy-lyase from Wigglesworthia glossinidia brevipalpis.